The chain runs to 88 residues: MITADNITSHEFIGLNTEIVQSTNPQVIGLNGRIENETKSMFTINTENGMKSIAKSTSNWKFSIDSNDVIVEGSRIAKRPFDRIGGKA.

This sequence belongs to the eukaryotic/archaeal RNase P protein component 1 family. In terms of assembly, consists of a catalytic RNA component and at least 4-5 protein subunits.

It localises to the cytoplasm. The enzyme catalyses Endonucleolytic cleavage of RNA, removing 5'-extranucleotides from tRNA precursor.. Part of ribonuclease P, a protein complex that generates mature tRNA molecules by cleaving their 5'-ends. The polypeptide is Ribonuclease P protein component 1 (Nitrosopumilus maritimus (strain SCM1)).